Reading from the N-terminus, the 108-residue chain is Phosphoribosyl-ATP pyrophosphatase (108 aa).

This sequence belongs to the PRA-PH family.

It is found in the cytoplasm. The enzyme catalyses 1-(5-phospho-beta-D-ribosyl)-ATP + H2O = 1-(5-phospho-beta-D-ribosyl)-5'-AMP + diphosphate + H(+). It functions in the pathway amino-acid biosynthesis; L-histidine biosynthesis; L-histidine from 5-phospho-alpha-D-ribose 1-diphosphate: step 2/9. In Chromobacterium violaceum (strain ATCC 12472 / DSM 30191 / JCM 1249 / CCUG 213 / NBRC 12614 / NCIMB 9131 / NCTC 9757 / MK), this protein is Phosphoribosyl-ATP pyrophosphatase.